Reading from the N-terminus, the 101-residue chain is Protein PrgJ (101 aa).

To S.flexneri MxiI.

Functionally, required for invasion of epithelial cells. The protein is Protein PrgJ (prgJ) of Salmonella typhimurium (strain LT2 / SGSC1412 / ATCC 700720).